The sequence spans 613 residues: Methionine--tRNA ligase (613 aa).

The 'HIGH' region signature appears at 15–25; it reads PYANGPRHIGH. Cys147, Cys150, Cys160, and Cys163 together coordinate Zn(2+). Positions 351 to 355 match the 'KMSKS' region motif; that stretch reads KFSSS. Residue Ser354 participates in ATP binding.

It belongs to the class-I aminoacyl-tRNA synthetase family. MetG type 1 subfamily. In terms of assembly, monomer. Zn(2+) is required as a cofactor.

The protein localises to the cytoplasm. It carries out the reaction tRNA(Met) + L-methionine + ATP = L-methionyl-tRNA(Met) + AMP + diphosphate. Is required not only for elongation of protein synthesis but also for the initiation of all mRNA translation through initiator tRNA(fMet) aminoacylation. The sequence is that of Methionine--tRNA ligase from Corynebacterium efficiens (strain DSM 44549 / YS-314 / AJ 12310 / JCM 11189 / NBRC 100395).